The sequence spans 124 residues: Small ribosomal subunit protein uS10 (124 aa).

It belongs to the universal ribosomal protein uS10 family.

The protein is Small ribosomal subunit protein uS10 (rps20) of Dictyostelium discoideum (Social amoeba).